A 376-amino-acid chain; its full sequence is Protein STRICTOSIDINE SYNTHASE-LIKE 8 (376 aa).

A signal peptide spans methionine 1–glycine 31. Asparagine 98, asparagine 172, and asparagine 224 each carry an N-linked (GlcNAc...) asparagine glycan.

It belongs to the strictosidine synthase family.

Its subcellular location is the vacuole. In Arabidopsis thaliana (Mouse-ear cress), this protein is Protein STRICTOSIDINE SYNTHASE-LIKE 8.